The following is a 150-amino-acid chain: UPF0178 protein PP_5221 (150 aa).

Belongs to the UPF0178 family.

The polypeptide is UPF0178 protein PP_5221 (Pseudomonas putida (strain ATCC 47054 / DSM 6125 / CFBP 8728 / NCIMB 11950 / KT2440)).